Consider the following 432-residue polypeptide: Adenylosuccinate synthetase (432 aa).

GTP contacts are provided by residues 12 to 18 and 40 to 42; these read GDEGKGK and GHT. D13 (proton acceptor) is an active-site residue. Positions 13 and 40 each coordinate Mg(2+). Residues 13–16, 38–41, T133, R147, Q228, T243, and R307 contribute to the IMP site; these read DEGK and NAGH. H41 serves as the catalytic Proton donor. 303–309 contributes to the substrate binding site; the sequence is TTTGRPR. Residues R309, 335–337, and 417–419 contribute to the GTP site; these read KLD and GVG.

The protein belongs to the adenylosuccinate synthetase family. As to quaternary structure, homodimer. The cofactor is Mg(2+).

The protein localises to the cytoplasm. The catalysed reaction is IMP + L-aspartate + GTP = N(6)-(1,2-dicarboxyethyl)-AMP + GDP + phosphate + 2 H(+). The protein operates within purine metabolism; AMP biosynthesis via de novo pathway; AMP from IMP: step 1/2. In terms of biological role, plays an important role in the de novo pathway of purine nucleotide biosynthesis. Catalyzes the first committed step in the biosynthesis of AMP from IMP. The protein is Adenylosuccinate synthetase of Nocardioides sp. (strain ATCC BAA-499 / JS614).